We begin with the raw amino-acid sequence, 213 residues long: Small ribosomal subunit protein uS5 (213 aa).

The tract at residues 1–41 (MSGRERNGGRSAENNDKKERNERNGRNDRGGRNDRRNQQDE) is disordered. One can recognise an S5 DRBM domain in the interval 45–108 (FIERVVTINR…EEARKNFFRV (64 aa)).

It belongs to the universal ribosomal protein uS5 family. In terms of assembly, part of the 30S ribosomal subunit. Contacts proteins S4 and S8.

Functionally, with S4 and S12 plays an important role in translational accuracy. In terms of biological role, located at the back of the 30S subunit body where it stabilizes the conformation of the head with respect to the body. The sequence is that of Small ribosomal subunit protein uS5 from Corynebacterium jeikeium (strain K411).